We begin with the raw amino-acid sequence, 1249 residues long: Myosin-1 (1249 aa).

The tract at residues 1-42 is disordered; that stretch reads MGHSRRPAGGEKKSRGFGRSKAVADVGDGRQTGGKPQVKKAT. The Myosin motor domain maps to 51–730; the sequence is IGVSDLTLLS…TLFALEAMRD (680 aa). Residue 144–151 coordinates ATP; the sequence is GESGAGKT. Residue S372 is modified to Phosphoserine. An actin-binding region spans residues 419–501; the sequence is SIGILDIYGF…PGVFAALNDA (83 aa). IQ domains are found at residues 734–754 and 755–780; these read HNMAIRIQRAWRNYLRYRTEC and AIRIQRFWRRTTGGLEFIKLRDQGHQ. The 191-residue stretch at 788 to 978 folds into the TH1 domain; sequence RRRMSLLGSR…TIHTGPGEPA (191 aa). Disordered stretches follow at residues 962–1079 and 1126–1249; these read DDSY…PKKP and WTPE…DDDW. A compositionally biased stretch (pro residues) spans 1021–1035; that stretch reads AAQPLPRATPQPAEP. The segment covering 1036–1051 has biased composition (low complexity); that stretch reads QPAARAVPQPVAAVAA. 2 stretches are compositionally biased toward pro residues: residues 1064–1077 and 1139–1150; these read APPPPPPAAAPAPK and TPKPAPPPPPAA. An SH3 domain is found at 1076–1137; it reads PKKPTAKVLY…PEAYLEEQVA (62 aa). Positions 1151 to 1169 are enriched in low complexity; the sequence is PRSTPAPATNGAAAAAKAK. A compositionally biased stretch (polar residues) spans 1200–1221; it reads VSMNSHDSSGGSGRGTPNSMSN. The segment covering 1222–1231 has biased composition (low complexity); sequence ASLAGGLAEA.

This sequence belongs to the TRAFAC class myosin-kinesin ATPase superfamily. Myosin family. Post-translationally, phosphorylation of the TEDS site (Ser-372) is required for the polarization of the actin cytoskeleton. Phosphorylation probably activates the myosin-I ATPase activity.

The protein resides in the cytoplasm. Its subcellular location is the cytoskeleton. The protein localises to the actin patch. Its function is as follows. Type-I myosin implicated in the organization of the actin cytoskeleton. Required for proper actin cytoskeleton polarization. At the cell cortex, assembles in patch-like structures together with proteins from the actin-polymerizing machinery and promotes actin assembly. Functions as actin nucleation-promoting factor (NPF) for the Arp2/3 complex. Plays an important role in polarized growth, spore germination, hyphal morphogenesis, and septal wall formation. The polypeptide is Myosin-1 (myoA) (Aspergillus fumigatus (strain ATCC MYA-4609 / CBS 101355 / FGSC A1100 / Af293) (Neosartorya fumigata)).